We begin with the raw amino-acid sequence, 316 residues long: Ribosomal RNA small subunit methyltransferase H (316 aa).

Residues 42–44, D62, F86, D104, and Q111 contribute to the S-adenosyl-L-methionine site; that span reads GGH.

The protein belongs to the methyltransferase superfamily. RsmH family.

Its subcellular location is the cytoplasm. It catalyses the reaction cytidine(1402) in 16S rRNA + S-adenosyl-L-methionine = N(4)-methylcytidine(1402) in 16S rRNA + S-adenosyl-L-homocysteine + H(+). Specifically methylates the N4 position of cytidine in position 1402 (C1402) of 16S rRNA. The polypeptide is Ribosomal RNA small subunit methyltransferase H (Polynucleobacter asymbioticus (strain DSM 18221 / CIP 109841 / QLW-P1DMWA-1) (Polynucleobacter necessarius subsp. asymbioticus)).